The following is a 31-amino-acid chain: Potassium channel toxin alpha-KTx 5.4 (31 aa).

3 cysteine pairs are disulfide-bonded: Cys3–Cys21, Cys8–Cys26, and Cys12–Cys28. Residues 6–9 (RRCE) are [R/K]XCQ motif. Tyr31 is subject to Tyrosine amide.

The protein belongs to the short scorpion toxin superfamily. Potassium channel inhibitor family. Alpha-KTx 05 subfamily. Expressed by the venom gland.

It localises to the secreted. Blocks small conductance calcium-activated potassium channels. Shows activity on KCa2.2/KCNN2 (IC(50)=0.0243 nM), KCa2.3/KCNN3 (IC(50)=1.7 nM), and KCa2.1/KCNN1 (IC(50)=42 nM). Induces cell death when tested on human T lymphoblastic leukemia Jurkat E6.1 and human breast cancer MDA-MB-231 cell lines which constituvely express KCa2.2/KCNN2, but not on human peripheral blood lymphocytes (which do not express KCa2.2/KCNN2). The protein is Potassium channel toxin alpha-KTx 5.4 of Hottentotta tamulus (Eastern Indian scorpion).